Here is a 212-residue protein sequence, read N- to C-terminus: Ribosomal RNA small subunit methyltransferase G (212 aa).

S-adenosyl-L-methionine contacts are provided by residues G80, L85, 131-132 (VE), and R146.

The protein belongs to the methyltransferase superfamily. RNA methyltransferase RsmG family.

The protein localises to the cytoplasm. It carries out the reaction guanosine(527) in 16S rRNA + S-adenosyl-L-methionine = N(7)-methylguanosine(527) in 16S rRNA + S-adenosyl-L-homocysteine. Specifically methylates the N7 position of guanine in position 527 of 16S rRNA. This Azoarcus sp. (strain BH72) protein is Ribosomal RNA small subunit methyltransferase G.